Here is a 239-residue protein sequence, read N- to C-terminus: Ribonuclease PH (239 aa).

Phosphate is bound by residues R86 and 124–126; that span reads GTR.

This sequence belongs to the RNase PH family. Homohexameric ring arranged as a trimer of dimers.

The catalysed reaction is tRNA(n+1) + phosphate = tRNA(n) + a ribonucleoside 5'-diphosphate. Functionally, phosphorolytic 3'-5' exoribonuclease that plays an important role in tRNA 3'-end maturation. Removes nucleotide residues following the 3'-CCA terminus of tRNAs; can also add nucleotides to the ends of RNA molecules by using nucleoside diphosphates as substrates, but this may not be physiologically important. Probably plays a role in initiation of 16S rRNA degradation (leading to ribosome degradation) during starvation. The polypeptide is Ribonuclease PH (Rickettsia bellii (strain RML369-C)).